Here is a 253-residue protein sequence, read N- to C-terminus: uncharacterized protein (253 aa).

EamA domains follow at residues Met-1–Leu-97 and Phe-116–Leu-237. The next 8 membrane-spanning stretches (helical) occupy residues Phe-2–Leu-22, Ile-28–Tyr-48, Glu-53–Leu-73, Thr-80–Gly-100, Ile-101–Phe-121, Ala-138–Phe-158, Ile-162–Leu-182, and Gly-214–Ile-234.

The protein belongs to the EamA transporter family.

It is found in the cell membrane. This is an uncharacterized protein from Acidianus ambivalens (Desulfurolobus ambivalens).